Here is a 265-residue protein sequence, read N- to C-terminus: Phosphonates import ATP-binding protein PhnC 1 (265 aa).

Residues 3 to 247 form the ABC transporter domain; sequence LRLSAIDLRH…HLDTLYANEQ (245 aa). An ATP-binding site is contributed by 36 to 43; that stretch reads GPSGAGKT.

The protein belongs to the ABC transporter superfamily. Phosphonates importer (TC 3.A.1.9.1) family. The complex is composed of two ATP-binding proteins (PhnC), two transmembrane proteins (PhnE) and a solute-binding protein (PhnD).

The protein localises to the cell inner membrane. It carries out the reaction phosphonate(out) + ATP + H2O = phosphonate(in) + ADP + phosphate + H(+). Functionally, part of the ABC transporter complex PhnCDE involved in phosphonates import. Responsible for energy coupling to the transport system. This Pseudomonas syringae pv. tomato (strain ATCC BAA-871 / DC3000) protein is Phosphonates import ATP-binding protein PhnC 1.